Consider the following 435-residue polypeptide: Trigger factor (435 aa).

The PPIase FKBP-type domain occupies 163 to 248 (DDITLIDFTG…INEIKRKELA (86 aa)).

It belongs to the FKBP-type PPIase family. Tig subfamily.

The protein resides in the cytoplasm. The enzyme catalyses [protein]-peptidylproline (omega=180) = [protein]-peptidylproline (omega=0). In terms of biological role, involved in protein export. Acts as a chaperone by maintaining the newly synthesized protein in an open conformation. Functions as a peptidyl-prolyl cis-trans isomerase. This chain is Trigger factor, found in Desulforamulus reducens (strain ATCC BAA-1160 / DSM 100696 / MI-1) (Desulfotomaculum reducens).